A 130-amino-acid chain; its full sequence is Transcription antitermination protein NusB (130 aa).

Belongs to the NusB family.

Involved in transcription antitermination. Required for transcription of ribosomal RNA (rRNA) genes. Binds specifically to the boxA antiterminator sequence of the ribosomal RNA (rrn) operons. The protein is Transcription antitermination protein NusB of Geobacillus kaustophilus (strain HTA426).